Consider the following 423-residue polypeptide: UPF0229 protein Psyr_4632 (423 aa).

A disordered region spans residues 65–110; sequence HHGRGGKQTVVHPGNKEFTTGEHIARPQGGGGGKGPGKAGNSGEGM. Positions 92-107 are enriched in gly residues; it reads QGGGGGKGPGKAGNSG.

The protein belongs to the UPF0229 family.

This is UPF0229 protein Psyr_4632 from Pseudomonas syringae pv. syringae (strain B728a).